Here is a 208-residue protein sequence, read N- to C-terminus: Small ribosomal subunit protein uS4 (208 aa).

In terms of domain architecture, S4 RNA-binding spans 98–161 (QRLDNVVYRM…KNNPQIVRAI (64 aa)).

This sequence belongs to the universal ribosomal protein uS4 family. As to quaternary structure, part of the 30S ribosomal subunit. Contacts protein S5. The interaction surface between S4 and S5 is involved in control of translational fidelity.

In terms of biological role, one of the primary rRNA binding proteins, it binds directly to 16S rRNA where it nucleates assembly of the body of the 30S subunit. Its function is as follows. With S5 and S12 plays an important role in translational accuracy. The polypeptide is Small ribosomal subunit protein uS4 (Campylobacter concisus (strain 13826)).